Consider the following 362-residue polypeptide: Probable dual-specificity RNA methyltransferase RlmN (362 aa).

Residue Glu-105 is the Proton acceptor of the active site. Positions 111 to 344 (HEYGNSICVT…VTIRREQGHD (234 aa)) constitute a Radical SAM core domain. An intrachain disulfide couples Cys-118 to Cys-349. [4Fe-4S] cluster contacts are provided by Cys-125, Cys-129, and Cys-132. S-adenosyl-L-methionine is bound by residues 175–176 (GE), Ser-207, 230–232 (SLH), and Asn-306. Cys-349 serves as the catalytic S-methylcysteine intermediate.

Belongs to the radical SAM superfamily. RlmN family. It depends on [4Fe-4S] cluster as a cofactor.

The protein localises to the cytoplasm. The enzyme catalyses adenosine(2503) in 23S rRNA + 2 reduced [2Fe-2S]-[ferredoxin] + 2 S-adenosyl-L-methionine = 2-methyladenosine(2503) in 23S rRNA + 5'-deoxyadenosine + L-methionine + 2 oxidized [2Fe-2S]-[ferredoxin] + S-adenosyl-L-homocysteine. The catalysed reaction is adenosine(37) in tRNA + 2 reduced [2Fe-2S]-[ferredoxin] + 2 S-adenosyl-L-methionine = 2-methyladenosine(37) in tRNA + 5'-deoxyadenosine + L-methionine + 2 oxidized [2Fe-2S]-[ferredoxin] + S-adenosyl-L-homocysteine. Functionally, specifically methylates position 2 of adenine 2503 in 23S rRNA and position 2 of adenine 37 in tRNAs. This Bacillus cereus (strain ATCC 14579 / DSM 31 / CCUG 7414 / JCM 2152 / NBRC 15305 / NCIMB 9373 / NCTC 2599 / NRRL B-3711) protein is Probable dual-specificity RNA methyltransferase RlmN.